The primary structure comprises 246 residues: Mediator of RNA polymerase II transcription subunit 6 (246 aa).

Disordered stretches follow at residues 165-186 and 207-246; these read MKKK…RSTN and EALE…ATTK. Composition is skewed to basic and acidic residues over residues 166–184 and 208–224; these read KKKE…EERS and ALEK…KPEE.

Belongs to the Mediator complex subunit 6 family. In terms of assembly, component of the Mediator complex. Interacts with let-19/mdt-13. Interacts with RNA polymerase II. Interacts with mdt-28.

It is found in the nucleus. In terms of biological role, component of the Mediator complex, a coactivator involved in the regulated transcription of nearly all RNA polymerase II-dependent genes. Mediator functions as a bridge to convey information from gene-specific regulatory proteins to the basal RNA polymerase II transcription machinery. Mediator is recruited to promoters by direct interactions with regulatory proteins and serves as a scaffold for the assembly of a functional preinitiation complex with RNA polymerase II and the general transcription factors. This chain is Mediator of RNA polymerase II transcription subunit 6 (mdt-6), found in Caenorhabditis briggsae.